The following is a 165-amino-acid chain: Regulator of ribonuclease activity A (165 aa).

This sequence belongs to the RraA family. As to quaternary structure, homotrimer. Binds to both RNA-binding sites in the C-terminal region of Rne and to RhlB.

It is found in the cytoplasm. In terms of biological role, globally modulates RNA abundance by binding to RNase E (Rne) and regulating its endonucleolytic activity. Can modulate Rne action in a substrate-dependent manner by altering the composition of the degradosome. Modulates RNA-binding and helicase activities of the degradosome. The sequence is that of Regulator of ribonuclease activity A from Actinobacillus pleuropneumoniae serotype 7 (strain AP76).